The sequence spans 300 residues: Oxidoreductase BOA1 (300 aa).

This sequence belongs to the NmrA-type oxidoreductase family. Isoflavone reductase subfamily.

Its pathway is polyketide biosynthesis. In terms of biological role, oxidoreductase; part of the gene cluster A that mediates the biosynthesis of botcinic acid and its botcinin derivatives, acetate-derived polyketides that contribute to virulence when combined with the sesquiterpene botrydial. Botcinic acid and its derivatives have been shown to induce chlorosis and necrosis during host plant infection, but also have antifungal activities. Two polyketide synthases, BOA6 and BOA9, are involved in the biosynthesis of botcinins. BOA6 mediates the formation of the per-methylated tetraketide core by condensation of four units of malonyl-CoA with one unit of acetyl-CoA, which would be methylated in activated methylene groups to yield a bicyclic acid intermediate that could then either be converted to botrylactone derivatives or lose the starter acetate unit through a retro-Claisen type C-C bond cleavage to yield botcinin derivatives. The second polyketide synthase, BOA9, is probably required for the biosynthesis of the tetraketide side chain of botcinins. The methyltransferase (MT) domain within BOA6 is probably responsible for the incorporation of four methyl groups. The trans-enoyl reductase BOA5 might take over the enoyl reductase function of BOA6 that misses an ER domain. The monooxygenases BOA2, BOA3 and BOA4 might be involved in further hydroxylations at C4, C5 and C8, whereas BOA7, close to BOA9, could potentially be involved in the hydroxylation at C4 in the side chain of botcinins. The chain is Oxidoreductase BOA1 from Botryotinia fuckeliana (strain B05.10) (Noble rot fungus).